The sequence spans 80 residues: MAVKLRLQRFGNHKRPFYRIVAADAKAPRDGKFLEIVGTYEPIKGAVAVDSEKVQAWMNNGAQPTDTVKSLFKKFNVLNK.

The protein belongs to the bacterial ribosomal protein bS16 family.

In Acholeplasma laidlawii (strain PG-8A), this protein is Small ribosomal subunit protein bS16.